Here is a 760-residue protein sequence, read N- to C-terminus: Complement C2 (760 aa).

The signal sequence occupies residues 1-18 (MAPLLALFYLLQLGPGLA). Sushi domains lie at 20-90 (LFCN…AVCK), 92-151 (VRCL…VCDN), and 154-212 (SHCP…ICRQ). 6 cysteine pairs are disulfide-bonded: Cys22–Cys62, Cys49–Cys89, Cys94–Cys136, Cys122–Cys149, Cys156–Cys197, and Cys182–Cys210. N-linked (GlcNAc...) asparagine glycans are attached at residues Asn27 and Asn32. Asn117 carries an N-linked (GlcNAc...) asparagine glycan. The region spanning 261 to 459 (NLYLLLDASQ…KALQQIFEHM (199 aa)) is the VWFA domain. Positions 267-271 (DASQS) match the MIDAS-like motif motif. Residues Ser269 and Ser271 each coordinate Mg(2+). Residues Asn297 and Asn340 are each glycosylated (N-linked (GlcNAc...) asparagine). Thr344 serves as a coordination point for Mg(2+). 5 cysteine pairs are disulfide-bonded: Cys470-Cys590, Cys499-Cys515, Cys593-Cys609, Cys647-Cys674, and Cys685-Cys715. A Peptidase S1 domain is found at 471–752 (GVGNMSANAS…LQPWLRQHLD (282 aa)). Residues Asn474 and Asn478 are each glycosylated (N-linked (GlcNAc...) asparagine). Residues His514 and Asp570 each act as charge relay system in the active site. Asn663 carries an N-linked (GlcNAc...) asparagine glycan. The active-site Charge relay system is the Ser689.

It belongs to the peptidase S1 family. Serine protease component of the C3 convertase, also named C4bC2b, composed of the serine protease complement C2b and complement C4b. Serine protease component of the C5 convertase, also named C4bC2bC3b, composed of the serine protease complement C2b, complement C3b, as well as complement C4b. Requires Mg(2+) as cofactor. It depends on Mn(2+) as a cofactor. In terms of processing, cleaved and activated by different proteases depending on the complement pathway to generate complement C2a and serine protease complement C2b chains. Cleaved and activated by C1S following activation by the classical complement system. Cleaved and activated by MASP2 following activation by the lectin complement system. Cleaved and activated by GZMK following activation by the GZMK complement system.

The protein resides in the secreted. It localises to the cell surface. It catalyses the reaction Selective cleavage of Arg-|-Ser bond in complement component C3 alpha-chain to form C3a and C3b, and Arg-|-Xaa bond in complement component C5 alpha-chain to form C5a and C5b.. In terms of biological role, precursor of the catalytic component of the C3 and C5 convertase complexes, which are part of the complement pathway, a cascade of proteins that leads to phagocytosis and breakdown of pathogens and signaling that strengthens the adaptive immune system. Component C2 is part of the classical, lectin and GZMK complement systems. Functionally, catalytic component of the complement C3 and C5 convertase complexes. Following complement activation, recruited to the surface of pathogens by complement C4b opsonin to form the C3 convertase, or C3b and C4b opsonins to form the C5 convertase. As part of the C3 convertase, cleaves and activate C3 into C3a anaphylatoxin and C3b opsonin, the next components of the complement pathways. As part of the C5 convertase, cleaves and activate C5 into C5a anaphylatoxin and C5b component of the membrane attack complex. In Mus musculus (Mouse), this protein is Complement C2.